We begin with the raw amino-acid sequence, 117 residues long: Large ribosomal subunit protein uL18 (117 aa).

The protein belongs to the universal ribosomal protein uL18 family. Part of the 50S ribosomal subunit; part of the 5S rRNA/L5/L18/L25 subcomplex. Contacts the 5S and 23S rRNAs.

Functionally, this is one of the proteins that bind and probably mediate the attachment of the 5S RNA into the large ribosomal subunit, where it forms part of the central protuberance. This is Large ribosomal subunit protein uL18 from Phytoplasma australiense.